A 577-amino-acid chain; its full sequence is Aspartate--tRNA ligase (577 aa).

L-aspartate is bound at residue Glu169. Residues 193–196 (QLYK) are aspartate. Residue Arg215 participates in L-aspartate binding. ATP contacts are provided by residues 215–217 (RDE) and Gln224. His440 provides a ligand contact to L-aspartate. Glu474 is a binding site for ATP. Arg481 is a binding site for L-aspartate. 526–529 (GIDR) lines the ATP pocket.

This sequence belongs to the class-II aminoacyl-tRNA synthetase family. Type 1 subfamily. As to quaternary structure, homodimer.

It localises to the cytoplasm. It catalyses the reaction tRNA(Asp) + L-aspartate + ATP = L-aspartyl-tRNA(Asp) + AMP + diphosphate. Its function is as follows. Catalyzes the attachment of L-aspartate to tRNA(Asp) in a two-step reaction: L-aspartate is first activated by ATP to form Asp-AMP and then transferred to the acceptor end of tRNA(Asp). The polypeptide is Aspartate--tRNA ligase (Mesoplasma florum (strain ATCC 33453 / NBRC 100688 / NCTC 11704 / L1) (Acholeplasma florum)).